A 158-amino-acid polypeptide reads, in one-letter code: SsrA-binding protein (158 aa).

Belongs to the SmpB family.

It is found in the cytoplasm. Functionally, required for rescue of stalled ribosomes mediated by trans-translation. Binds to transfer-messenger RNA (tmRNA), required for stable association of tmRNA with ribosomes. tmRNA and SmpB together mimic tRNA shape, replacing the anticodon stem-loop with SmpB. tmRNA is encoded by the ssrA gene; the 2 termini fold to resemble tRNA(Ala) and it encodes a 'tag peptide', a short internal open reading frame. During trans-translation Ala-aminoacylated tmRNA acts like a tRNA, entering the A-site of stalled ribosomes, displacing the stalled mRNA. The ribosome then switches to translate the ORF on the tmRNA; the nascent peptide is terminated with the 'tag peptide' encoded by the tmRNA and targeted for degradation. The ribosome is freed to recommence translation, which seems to be the essential function of trans-translation. This is SsrA-binding protein from Pseudoalteromonas atlantica (strain T6c / ATCC BAA-1087).